The chain runs to 226 residues: Uracil phosphoribosyltransferase (226 aa).

A GTP-binding site is contributed by 36 to 40 (KGLVK). 5-phospho-alpha-D-ribose 1-diphosphate contacts are provided by residues R86, R111, and 145–153 (DPMLATGST). Uracil-binding positions include I211 and 216-218 (GDA). D217 serves as a coordination point for 5-phospho-alpha-D-ribose 1-diphosphate.

This sequence belongs to the UPRTase family. The cofactor is Mg(2+).

The enzyme catalyses UMP + diphosphate = 5-phospho-alpha-D-ribose 1-diphosphate + uracil. Its pathway is pyrimidine metabolism; UMP biosynthesis via salvage pathway; UMP from uracil: step 1/1. With respect to regulation, allosterically activated by GTP. Functionally, catalyzes the conversion of uracil and 5-phospho-alpha-D-ribose 1-diphosphate (PRPP) to UMP and diphosphate. The protein is Uracil phosphoribosyltransferase of Haloquadratum walsbyi (strain DSM 16790 / HBSQ001).